The sequence spans 433 residues: Probable non-inhibitory serpin-Z5 (433 aa).

Residues 1 to 12 show a composition bias toward basic and acidic residues; sequence MEPKEKKQKLDT. A disordered region spans residues 1–43; sequence MEPKEKKQKLDTSEVASPSLSKTHLKKKKTKKQKIRKSQEITS. A compositionally biased stretch (basic residues) spans 23–36; the sequence is THLKKKKTKKQKIR. The interval 380–404 is RCL; it reads GTEAVTFTAFRSAYLGCALVKPIDF.

Belongs to the serpin family. Weakly expressed during seedling development.

This Arabidopsis thaliana (Mouse-ear cress) protein is Probable non-inhibitory serpin-Z5.